A 406-amino-acid polypeptide reads, in one-letter code: Cysteine desulfurase (406 aa).

K226 is subject to N6-(pyridoxal phosphate)lysine. The active-site Cysteine persulfide intermediate is the C364.

The protein belongs to the class-V pyridoxal-phosphate-dependent aminotransferase family. Csd subfamily. As to quaternary structure, homodimer. Interacts with SufE and the SufBCD complex composed of SufB, SufC and SufD. The interaction with SufE is required to mediate the direct transfer of the sulfur atom from the S-sulfanylcysteine. The cofactor is pyridoxal 5'-phosphate.

The protein localises to the cytoplasm. The enzyme catalyses (sulfur carrier)-H + L-cysteine = (sulfur carrier)-SH + L-alanine. It catalyses the reaction L-selenocysteine + AH2 = hydrogenselenide + L-alanine + A + H(+). Its pathway is cofactor biosynthesis; iron-sulfur cluster biosynthesis. Its function is as follows. Cysteine desulfurases mobilize the sulfur from L-cysteine to yield L-alanine, an essential step in sulfur metabolism for biosynthesis of a variety of sulfur-containing biomolecules. Component of the suf operon, which is activated and required under specific conditions such as oxidative stress and iron limitation. Acts as a potent selenocysteine lyase in vitro, that mobilizes selenium from L-selenocysteine. Selenocysteine lyase activity is however unsure in vivo. In Salmonella choleraesuis (strain SC-B67), this protein is Cysteine desulfurase.